Reading from the N-terminus, the 474-residue chain is Ribulose bisphosphate carboxylase large chain (474 aa).

Substrate is bound by residues Asn122 and Thr172. Residue Lys174 is the Proton acceptor of the active site. Residue Lys176 participates in substrate binding. 3 residues coordinate Mg(2+): Lys200, Asp202, and Glu203. At Lys200 the chain carries N6-carboxylysine. His293 serves as the catalytic Proton acceptor. Substrate-binding residues include Arg294, His326, and Ser378.

Belongs to the RuBisCO large chain family. Type I subfamily. In terms of assembly, heterohexadecamer of 8 large chains and 8 small chains; disulfide-linked. The disulfide link is formed within the large subunit homodimers. Mg(2+) is required as a cofactor. The disulfide bond which can form in the large chain dimeric partners within the hexadecamer appears to be associated with oxidative stress and protein turnover.

The protein localises to the carboxysome. It catalyses the reaction 2 (2R)-3-phosphoglycerate + 2 H(+) = D-ribulose 1,5-bisphosphate + CO2 + H2O. It carries out the reaction D-ribulose 1,5-bisphosphate + O2 = 2-phosphoglycolate + (2R)-3-phosphoglycerate + 2 H(+). In terms of biological role, ruBisCO catalyzes two reactions: the carboxylation of D-ribulose 1,5-bisphosphate, the primary event in carbon dioxide fixation, as well as the oxidative fragmentation of the pentose substrate in the photorespiration process. Both reactions occur simultaneously and in competition at the same active site. This Gloeobacter violaceus (strain ATCC 29082 / PCC 7421) protein is Ribulose bisphosphate carboxylase large chain.